The sequence spans 143 residues: Fido domain-containing protein DDB_G0283145 (143 aa).

One can recognise a Fido domain in the interval 1 to 128; the sequence is MKGIIVSDGV…TSHLALIILN (128 aa). Residues 49-69 traverse the membrane as a helical segment; that stretch reads SSPYAVAAWLLHAFVSIHPFI.

The protein localises to the membrane. In Dictyostelium discoideum (Social amoeba), this protein is Fido domain-containing protein DDB_G0283145.